Consider the following 101-residue polypeptide: MERRTGVVLIIFVTFCEAMMARAIEDFDTHYTKKIREFLLFIIHTSCTMVAFIIGNLAMTRPRRTHHNTITAPDETIHDDILLPPAYKSLASAPALGIKMV.

The first 23 residues, 1-23, serve as a signal peptide directing secretion; sequence MERRTGVVLIIFVTFCEAMMARA. The helical transmembrane segment at 38–58 threads the bilayer; sequence FLLFIIHTSCTMVAFIIGNLA.

The protein resides in the host membrane. This is an uncharacterized protein from Cryphonectria parasitica (Chestnut blight fungus).